The following is a 309-amino-acid chain: Taste receptor type 2 member 46 (309 aa).

Position 1 (methionine 1) is a topological domain, extracellular. The chain crosses the membrane as a helical span at residues 2 to 22 (ITFLPIIFSILIVVTFVIGNF). At 23–46 (ANGFIALANSIEWFKRQKISFADQ) the chain is on the cytoplasmic side. Residues 47 to 67 (ILTALAVSRVGLLWVLLLNWY) form a helical membrane-spanning segment. Residues 68–86 (ATELNPAFYSIEVRITAYN) are Extracellular-facing. The helical transmembrane segment at 87-107 (LWAVINHFSNWLATSLSIFYL) threads the bilayer. Residues 108-126 (LKIANFSNLIFLCLKRRVK) are Cytoplasmic-facing. Residues 127–147 (SVVLVILLGPLLFLVCHLFVI) traverse the membrane as a helical segment. Residues 148 to 178 (NMNQIIWTKEYEGNMTWKIKLRSAMYLSNTT) are Extracellular-facing. N-linked (GlcNAc...) asparagine glycosylation is found at asparagine 161 and asparagine 176. The helical transmembrane segment at 179–199 (VTILANLVPFTLTLISFLLLI) threads the bilayer. The Cytoplasmic portion of the chain corresponds to 200 to 229 (CSLCKHLEKMQLHGKGSQDPSMKVHIKALQ). The chain crosses the membrane as a helical span at residues 230–250 (TVTSFLLLCAIYFLSIIMSVW). At 251-259 (SFESLENKP) the chain is on the extracellular side. Residues 260–280 (VFMFCEAITFSYPSTHPFILI) traverse the membrane as a helical segment. The Cytoplasmic segment spans residues 281–309 (WGNKKLKQTFLSVLWHVRYWVKGEKPSXP).

Belongs to the G-protein coupled receptor T2R family.

The protein localises to the membrane. Its subcellular location is the cell projection. It localises to the cilium membrane. Its function is as follows. Receptor that may play a role in the perception of bitterness and is gustducin-linked. May play a role in sensing the chemical composition of the gastrointestinal content. The activity of this receptor may stimulate alpha gustducin, mediate PLC-beta-2 activation and lead to the gating of TRPM5. In airway epithelial cells, binding of bitter compounds increases the intracellular calcium ion concentration and stimulates ciliary beat frequency. The sequence is that of Taste receptor type 2 member 46 (TAS2R46) from Pan troglodytes (Chimpanzee).